The following is an 88-amino-acid chain: MASKEFHIVAETGIHARPATLLVQTASKFTSEITLEYKGKSVNLKSIMGVMSLGVGQGADVTISAEGADADDAIATIAETMTKEGLAE.

The region spanning 1-88 is the HPr domain; sequence MASKEFHIVA…ETMTKEGLAE (88 aa). Histidine 15 acts as the Pros-phosphohistidine intermediate in catalysis. Serine 46 bears the Phosphoserine; by HPrK/P mark.

This sequence belongs to the HPr family.

The protein resides in the cytoplasm. With respect to regulation, phosphorylation on Ser-46 inhibits the phosphoryl transfer from enzyme I to HPr. General (non sugar-specific) component of the phosphoenolpyruvate-dependent sugar phosphotransferase system (sugar PTS). This major carbohydrate active-transport system catalyzes the phosphorylation of incoming sugar substrates concomitantly with their translocation across the cell membrane. The phosphoryl group from phosphoenolpyruvate (PEP) is transferred to the phosphoryl carrier protein HPr by enzyme I. Phospho-HPr then transfers it to the PTS EIIA domain. Functionally, P-Ser-HPr interacts with the catabolite control protein A (CcpA), forming a complex that binds to DNA at the catabolite response elements cre, operator sites preceding a large number of catabolite-regulated genes. Thus, P-Ser-HPr is a corepressor in carbon catabolite repression (CCR), a mechanism that allows bacteria to coordinate and optimize the utilization of available carbon sources. P-Ser-HPr also plays a role in inducer exclusion, in which it probably interacts with several non-PTS permeases and inhibits their transport activity. The chain is Phosphocarrier protein HPr (ptsH) from Lactococcus lactis subsp. cremoris (Streptococcus cremoris).